Consider the following 469-residue polypeptide: Probable periplasmic serine endoprotease DegP-like (469 aa).

An N-terminal signal peptide occupies residues 1–25 (MNRLLKQVCMVVVSSFMMASMLTHA). Active-site charge relay system residues include His114, Asp144, and Ser217. Substrate-binding positions include 215-217 (GNS) and 272-276 (LGVLI). PDZ domains lie at 261 to 352 (LKSD…YRDG) and 358 to 458 (SVTL…IRQG).

The protein belongs to the peptidase S1C family.

The protein localises to the periplasm. The catalysed reaction is Acts on substrates that are at least partially unfolded. The cleavage site P1 residue is normally between a pair of hydrophobic residues, such as Val-|-Val.. Might be efficient in the degradation of transiently denatured and unfolded proteins which accumulate in the periplasm following stress conditions. The protein is Probable periplasmic serine endoprotease DegP-like of Marinomonas sp. (strain MWYL1).